The following is a 329-amino-acid chain: Palmitoyltransferase pfa3 (329 aa).

Helical transmembrane passes span 14–34, 49–69, 141–161, 177–197, and 243–263; these read VLVILAKYCMQIIALSLMSGV, VGIIILFLYIMIVTCYVLTNL, FFFLECFYLNLYSICVLYSTF, AIYLVFWGFLFAFAVGMSIVM, and IMGKSPFLWLLPFPNSIGEGV. In terms of domain architecture, DHHC spans 97 to 147; the sequence is RFCEKCQEYKCDRSHHCSQCNKCILRMDHHCMWFKNCVGFRNHKFFFLECF.

Belongs to the DHHC palmitoyltransferase family. PFA3 subfamily. In terms of processing, autopalmitoylated.

Its subcellular location is the vacuole membrane. It localises to the golgi apparatus membrane. The catalysed reaction is L-cysteinyl-[protein] + hexadecanoyl-CoA = S-hexadecanoyl-L-cysteinyl-[protein] + CoA. Palmitoyltransferase specific for VAC8. Palmitoylates VAC8 at one or more of its N-terminal cysteine residues, which is required for its proper membrane localization. This is Palmitoyltransferase pfa3 (pfa3) from Schizosaccharomyces pombe (strain 972 / ATCC 24843) (Fission yeast).